We begin with the raw amino-acid sequence, 530 residues long: Ubiquitin carboxyl-terminal hydrolase 17-like protein 18 (530 aa).

Residues Ala80–Lys375 enclose the USP domain. Cys89 acts as the Nucleophile in catalysis. The active-site Proton acceptor is the His334. Composition is skewed to basic and acidic residues over residues Ser382 to Arg392 and Asp398 to Pro413. Disordered regions lie at residues Ser382 to Cys414 and Arg509 to Gln530. The span at Gly510–Arg524 shows a compositional bias: basic residues.

It belongs to the peptidase C19 family. USP17 subfamily.

It localises to the nucleus. The protein localises to the endoplasmic reticulum. The enzyme catalyses Thiol-dependent hydrolysis of ester, thioester, amide, peptide and isopeptide bonds formed by the C-terminal Gly of ubiquitin (a 76-residue protein attached to proteins as an intracellular targeting signal).. Deubiquitinating enzyme that removes conjugated ubiquitin from specific proteins to regulate different cellular processes that may include cell proliferation, progression through the cell cycle, apoptosis, cell migration, and the cellular response to viral infection. The protein is Ubiquitin carboxyl-terminal hydrolase 17-like protein 18 (USP17L18) of Homo sapiens (Human).